A 76-amino-acid polypeptide reads, in one-letter code: Bowman-Birk type proteinase inhibitor DE-3 (76 aa).

7 cysteine pairs are disulfide-bonded: cysteine 16-cysteine 70, cysteine 17-cysteine 32, cysteine 20-cysteine 66, cysteine 22-cysteine 30, cysteine 40-cysteine 47, cysteine 44-cysteine 59, and cysteine 49-cysteine 57.

It belongs to the Bowman-Birk serine protease inhibitor family.

This is Bowman-Birk type proteinase inhibitor DE-3 from Macrotyloma axillare (Perennial horse gram).